A 952-amino-acid chain; its full sequence is Histone deacetylase 7 (952 aa).

2 transcription repression regions span residues 1 to 268 and 218 to 546; these read MDLR…DSDR and GPNP…EHAG. Positions 49–149 are interaction with MEF2A; it reads SMDTPMPELQ…LPSDPPEHFP (101 aa). A Phosphoserine modification is found at serine 109. Disordered stretches follow at residues 130 to 224 and 261 to 283; these read LSSF…PILG and PARA…ILGS. Serine 155 is subject to Phosphoserine; by MARK2, MARK3 and PKD/PRKD1. Over residues 167–181 the composition is skewed to basic and acidic residues; sequence KSLERRKNPLLRKES. Residue serine 181 is modified to Phosphoserine; by PKD/PRKD2. Positions 197–212 are enriched in low complexity; it reads SSPSSSSTPASGCSSP. The residue at position 283 (serine 283) is a Phosphoserine. At threonine 286 the chain carries Phosphothreonine. Disordered regions lie at residues 349-377, 389-441, and 460-510; these read LHWP…MQPR, KRSA…GPAP, and LPRG…SSSE. Serine 358 carries the phosphoserine; by PKD/PRKD1 modification. Pro residues predominate over residues 360–374; the sequence is PLPPSATAPPPPGPM. Residues serine 364, serine 405, serine 486, serine 487, and serine 507 each carry the phosphoserine modification. A compositionally biased stretch (low complexity) spans 482–503; the sequence is SRAQSSPAAPASLSAPEPASQA. A histone deacetylase region spans residues 512-865; sequence PARTLPFTTG…VAALLGNRVD (354 aa). Positions 533, 535, and 541 each coordinate Zn(2+). A Phosphoserine modification is found at serine 595. Residue cysteine 618 participates in Zn(2+) binding. Histidine 670 is a catalytic residue. The interval 877-952 is interaction with SIN3A; sequence NLNAIRSLEA…LVEEEEPMNL (76 aa). The short motif at 917 to 952 is the Nuclear export signal element; that stretch reads KEEVEAVTALASLSVGILAEDRPSEQLVEEEEPMNL.

This sequence belongs to the histone deacetylase family. HD type 2 subfamily. In terms of assembly, interacts with HDAC1, HDAC2, HDAC3, HDAC4, HDAC5, NCOR1, NCOR2, SIN3A, SIN3B, RBBP4, RBBP7, MTA1L1, SAP30 and MBD3. Interacts with KAT5 and EDNRA. Interacts with the 14-3-3 protein YWHAE, MEF2A, MEF2B and MEF2C. Interacts with ZMYND15. Interacts with KDM5B. Interacts with PML. Interacts with FOXP3. Interacts with RARA. May be phosphorylated by CaMK1. Phosphorylated by the PKC kinases PKN1 and PKN2, impairing nuclear import. Phosphorylation at Ser-155 by MARK2, MARK3 and PRKD1 promotes interaction with 14-3-3 proteins and export from the nucleus. Phosphorylation at Ser-155 is a prerequisite for phosphorylation at Ser-181.

The protein resides in the nucleus. The protein localises to the cytoplasm. The enzyme catalyses N(6)-acetyl-L-lysyl-[histone] + H2O = L-lysyl-[histone] + acetate. It carries out the reaction N(6)-acetyl-L-lysyl-[protein] + H2O = L-lysyl-[protein] + acetate. Responsible for the deacetylation of lysine residues on the N-terminal part of the core histones (H2A, H2B, H3 and H4). Histone deacetylation gives a tag for epigenetic repression and plays an important role in transcriptional regulation, cell cycle progression and developmental events. Histone deacetylases act via the formation of large multiprotein complexes. Involved in muscle maturation by repressing transcription of myocyte enhancer factors such as MEF2A, MEF2B and MEF2C. During muscle differentiation, it shuttles into the cytoplasm, allowing the expression of myocyte enhancer factors. May be involved in Epstein-Barr virus (EBV) latency, possibly by repressing the viral BZLF1 gene. Positively regulates the transcriptional repressor activity of FOXP3. Serves as a corepressor of RARA, causing its deacetylation and inhibition of RARE DNA element binding. In association with RARA, plays a role in the repression of microRNA-10a and thereby in the inflammatory response. Also acetylates non-histone proteins, such as ALKBH5. The protein is Histone deacetylase 7 (HDAC7) of Homo sapiens (Human).